A 335-amino-acid polypeptide reads, in one-letter code: Foldase protein PrsA (335 aa).

A signal peptide spans 1 to 22; it reads MRSAKKLLSVLCLGVFILTFTA. The N-palmitoyl cysteine moiety is linked to residue Cys23. Cys23 is lipidated: S-diacylglycerol cysteine. The PpiC domain maps to 194-285; the sequence is PNTMNVSHIL…FGYHIIKINS (92 aa).

This sequence belongs to the PrsA family.

Its subcellular location is the cell membrane. The enzyme catalyses [protein]-peptidylproline (omega=180) = [protein]-peptidylproline (omega=0). In terms of biological role, plays a major role in protein secretion by helping the post-translocational extracellular folding of several secreted proteins. This is Foldase protein PrsA from Clostridium botulinum (strain Loch Maree / Type A3).